The primary structure comprises 605 residues: Elongation factor 4 (605 aa).

Positions 9–192 (SRTRNFCIIA…AIIARIPSPK (184 aa)) constitute a tr-type G domain. GTP is bound by residues 21–26 (DHGKST) and 139–142 (NKID).

It belongs to the TRAFAC class translation factor GTPase superfamily. Classic translation factor GTPase family. LepA subfamily.

Its subcellular location is the cell inner membrane. It catalyses the reaction GTP + H2O = GDP + phosphate + H(+). Required for accurate and efficient protein synthesis under certain stress conditions. May act as a fidelity factor of the translation reaction, by catalyzing a one-codon backward translocation of tRNAs on improperly translocated ribosomes. Back-translocation proceeds from a post-translocation (POST) complex to a pre-translocation (PRE) complex, thus giving elongation factor G a second chance to translocate the tRNAs correctly. Binds to ribosomes in a GTP-dependent manner. The protein is Elongation factor 4 of Chlorobium limicola (strain DSM 245 / NBRC 103803 / 6330).